Reading from the N-terminus, the 463-residue chain is Glycine--tRNA ligase (463 aa).

Positions 98 and 174 each coordinate substrate. ATP contacts are provided by residues 206-208 (RNE), 216-221 (FRTREF), 290-291 (EL), and 334-337 (GADR). 221 to 225 (FEQME) is a substrate binding site. Substrate is bound at residue 330–334 (EPSLG).

This sequence belongs to the class-II aminoacyl-tRNA synthetase family. As to quaternary structure, homodimer.

It localises to the cytoplasm. The enzyme catalyses tRNA(Gly) + glycine + ATP = glycyl-tRNA(Gly) + AMP + diphosphate. Functionally, catalyzes the attachment of glycine to tRNA(Gly). This is Glycine--tRNA ligase from Staphylococcus aureus (strain Mu50 / ATCC 700699).